The primary structure comprises 489 residues: F-box/LRR-repeat protein 7 (489 aa).

Low complexity predominate over residues 1 to 31 (MGANNGKQSGSEGKGSSSISSDLSSSTDQTS). The segment at 1–76 (MGANNGKQSG…AVLNGSSTSS (76 aa)) is disordered. Positions 32–55 (TKAPKNAATSEDSDLSMRTVSTPS) are enriched in polar residues. A compositionally biased stretch (low complexity) spans 64-76 (SSSAVLNGSSTSS). Positions 109–155 (GAPVDILPDHAFLQIFTHLPTNQLCRCARVCRRWYNLAWDPRLWRTI) constitute an F-box domain. 11 LRR repeats span residues 168–193 (LRVL…MVSG), 194–219 (CRRL…EVAG), 220–245 (CYNV…DVSG), 251–279 (CISL…DMTD), 280–305 (CFAL…YLRR), 306–331 (CVRL…SVSD), 332–357 (CRFI…SIAH), 358–383 (CSRI…NARG), 384–409 (CEGL…DIGK), 410–435 (CPLV…SLKS), and 436–461 (CESI…NVQD).

It belongs to the FBXL7 family. As to quaternary structure, part of the SCF (SKP1-CUL1-F-box) E3 ubiquitin-protein ligase complex SCF(FBXL7).

The protein resides in the cytoplasm. Its subcellular location is the cytoskeleton. It localises to the microtubule organizing center. It is found in the centrosome. Its pathway is protein modification; protein ubiquitination. Substrate recognition component of a SCF (SKP1-CUL1-F-box protein) E3 ubiquitin-protein ligase complex which mediates the ubiquitination and subsequent proteasomal degradation of target proteins. The protein is F-box/LRR-repeat protein 7 (fbxl7) of Danio rerio (Zebrafish).